Reading from the N-terminus, the 324-residue chain is Probable pectinesterase A (324 aa).

A signal peptide spans 1–19; the sequence is MHLPSLVLGLLGLGLTASA. Residue asparagine 27 is glycosylated (N-linked (GlcNAc...) asparagine). Glutamine 142 is a substrate binding site. The Proton donor role is filled by aspartate 165. Catalysis depends on aspartate 186, which acts as the Nucleophile. A glycan (N-linked (GlcNAc...) asparagine) is linked at asparagine 191. Residues arginine 246 and tryptophan 248 each contribute to the substrate site.

Belongs to the pectinesterase family.

It localises to the secreted. The catalysed reaction is [(1-&gt;4)-alpha-D-galacturonosyl methyl ester](n) + n H2O = [(1-&gt;4)-alpha-D-galacturonosyl](n) + n methanol + n H(+). It participates in glycan metabolism; pectin degradation; 2-dehydro-3-deoxy-D-gluconate from pectin: step 1/5. Functionally, involved in maceration and soft-rotting of plant tissue. The polypeptide is Probable pectinesterase A (pmeA) (Neosartorya fischeri (strain ATCC 1020 / DSM 3700 / CBS 544.65 / FGSC A1164 / JCM 1740 / NRRL 181 / WB 181) (Aspergillus fischerianus)).